Here is a 275-residue protein sequence, read N- to C-terminus: Undecaprenyl-diphosphatase (275 aa).

7 helical membrane-spanning segments follow: residues 8–28, 45–65, 92–112, 119–139, 197–217, 225–245, and 255–275; these read WTIVHYFVLGLVQGITEPIPI, ARGLSFEIFVNLASLLAVLII, FMFVVYLVLATIPVGIVGVLF, FIGEDGTTVVGITLLITAAAI, FSFLLYIPVSLGSSILEIPNI, ELWIPYLVAFITAFIASYFAL, and GNLKYFAYYCVIVGVLVLIFL.

It belongs to the UppP family.

It is found in the cell membrane. The enzyme catalyses di-trans,octa-cis-undecaprenyl diphosphate + H2O = di-trans,octa-cis-undecaprenyl phosphate + phosphate + H(+). In terms of biological role, catalyzes the dephosphorylation of undecaprenyl diphosphate (UPP). Confers resistance to bacitracin. The chain is Undecaprenyl-diphosphatase from Oceanobacillus iheyensis (strain DSM 14371 / CIP 107618 / JCM 11309 / KCTC 3954 / HTE831).